The following is a 280-amino-acid chain: MTLQPFDGFGLGLRPPHYRAFLDSERPLVDFVEVISENFMVGGGRPLHVIDAVRERYPVALHGVSMSVGSADGVKLDYLRRLKGLADRVDPMWVSDHLCWTGVEGFNSHDLLPVPYTEEAMAVVCANIALAQDVLERPLLLENPSSYVTFANDAMAEHQFLAEMCARTGCYLLLDINNIYVSASNHGFDPYEYLAAVPVDRVLQIHLAGHSQGRELLIDTHDQPVPDSVWALYEAAAGRFGPVAAMIERDDDIPPLDDLLAELDVARARWAAGRRGSLAA.

This sequence belongs to the UPF0276 family.

The chain is UPF0276 protein CC_2906 from Caulobacter vibrioides (strain ATCC 19089 / CIP 103742 / CB 15) (Caulobacter crescentus).